Reading from the N-terminus, the 174-residue chain is Large ribosomal subunit protein uL10 (174 aa).

Belongs to the universal ribosomal protein uL10 family. In terms of assembly, part of the ribosomal stalk of the 50S ribosomal subunit. The N-terminus interacts with L11 and the large rRNA to form the base of the stalk. The C-terminus forms an elongated spine to which L12 dimers bind in a sequential fashion forming a multimeric L10(L12)X complex.

In terms of biological role, forms part of the ribosomal stalk, playing a central role in the interaction of the ribosome with GTP-bound translation factors. In Nitrosospira multiformis (strain ATCC 25196 / NCIMB 11849 / C 71), this protein is Large ribosomal subunit protein uL10.